A 321-amino-acid polypeptide reads, in one-letter code: Acetyl-coenzyme A carboxylase carboxyl transferase subunit alpha (321 aa).

Positions 39 to 293 (RLQQKSQNLA…RRALGDALRQ (255 aa)) constitute a CoA carboxyltransferase C-terminal domain.

This sequence belongs to the AccA family. As to quaternary structure, acetyl-CoA carboxylase is a heterohexamer composed of biotin carboxyl carrier protein (AccB), biotin carboxylase (AccC) and two subunits each of ACCase subunit alpha (AccA) and ACCase subunit beta (AccD).

It is found in the cytoplasm. It carries out the reaction N(6)-carboxybiotinyl-L-lysyl-[protein] + acetyl-CoA = N(6)-biotinyl-L-lysyl-[protein] + malonyl-CoA. Its pathway is lipid metabolism; malonyl-CoA biosynthesis; malonyl-CoA from acetyl-CoA: step 1/1. In terms of biological role, component of the acetyl coenzyme A carboxylase (ACC) complex. First, biotin carboxylase catalyzes the carboxylation of biotin on its carrier protein (BCCP) and then the CO(2) group is transferred by the carboxyltransferase to acetyl-CoA to form malonyl-CoA. The sequence is that of Acetyl-coenzyme A carboxylase carboxyl transferase subunit alpha from Bordetella bronchiseptica (strain ATCC BAA-588 / NCTC 13252 / RB50) (Alcaligenes bronchisepticus).